The chain runs to 295 residues: Probable aspartoacylase (295 aa).

Positions 13 and 16 each coordinate Zn(2+). Substrate-binding positions include Arg-54 and 61 to 62 (NR). His-100 is a binding site for Zn(2+). Substrate is bound by residues Glu-158 and Tyr-268.

It belongs to the AspA/AstE family. Aspartoacylase subfamily. It depends on Zn(2+) as a cofactor.

The catalysed reaction is an N-acyl-L-aspartate + H2O = a carboxylate + L-aspartate. This Prochlorococcus marinus subsp. pastoris (strain CCMP1986 / NIES-2087 / MED4) protein is Probable aspartoacylase.